The primary structure comprises 196 residues: MAPGPSATQGILLLLPLLPLSQVTLGSADRNCDPSDQCPPQARWSSLWHVGLILLAILLMLLCGVTASCVRFCCLRKQTHTQSHTPAAWQPCDGTVIPVDSDSPAHSTVTSYSSVQYPLGMRLPLYFGEPDPDSMVPPTYSLYASELPPSYDEVVKMIKAREEVAAPSEKTNSLPEALEPETTGGPQEPGPSAQRP.

The signal sequence occupies residues 1-28 (MAPGPSATQGILLLLPLLPLSQVTLGSA). A helical membrane pass occupies residues 47-67 (LWHVGLILLAILLMLLCGVTA). The tract at residues 162-196 (EEVAAPSEKTNSLPEALEPETTGGPQEPGPSAQRP) is disordered.

Its subcellular location is the membrane. The polypeptide is Transmembrane protein 52 (Tmem52) (Mus musculus (Mouse)).